Reading from the N-terminus, the 333-residue chain is Adenosine deaminase (333 aa).

Zn(2+) contacts are provided by His12 and His14. Residues His14, Asp16, and Gly170 each coordinate substrate. Residue His197 participates in Zn(2+) binding. The active-site Proton donor is Glu200. Asp278 lines the Zn(2+) pocket. Asp279 contributes to the substrate binding site.

It belongs to the metallo-dependent hydrolases superfamily. Adenosine and AMP deaminases family. Adenosine deaminase subfamily. Requires Zn(2+) as cofactor.

It catalyses the reaction adenosine + H2O + H(+) = inosine + NH4(+). The catalysed reaction is 2'-deoxyadenosine + H2O + H(+) = 2'-deoxyinosine + NH4(+). Catalyzes the hydrolytic deamination of adenosine and 2-deoxyadenosine. The protein is Adenosine deaminase of Salmonella gallinarum (strain 287/91 / NCTC 13346).